Consider the following 271-residue polypeptide: DNA-directed RNA polymerase subunit Rpo3 (271 aa).

The protein belongs to the archaeal Rpo3/eukaryotic RPB3 RNA polymerase subunit family. In terms of assembly, part of the RNA polymerase complex.

Its subcellular location is the cytoplasm. It catalyses the reaction RNA(n) + a ribonucleoside 5'-triphosphate = RNA(n+1) + diphosphate. Functionally, DNA-dependent RNA polymerase (RNAP) catalyzes the transcription of DNA into RNA using the four ribonucleoside triphosphates as substrates. The sequence is that of DNA-directed RNA polymerase subunit Rpo3 from Thermoplasma volcanium (strain ATCC 51530 / DSM 4299 / JCM 9571 / NBRC 15438 / GSS1).